A 249-amino-acid polypeptide reads, in one-letter code: Large ribosomal subunit protein uL30A (249 aa).

The protein belongs to the universal ribosomal protein uL30 family. Component of the small ribosomal subunit (SSU). Mature yeast ribosomes consist of a small (40S) and a large (60S) subunit. The 40S small subunit contains 1 molecule of ribosomal RNA (18S rRNA) and at least 33 different proteins. The large 60S subunit contains 3 rRNA molecules (25S, 5.8S and 5S rRNA) and at least 46 different proteins.

It localises to the cytoplasm. The protein resides in the nucleus. Its subcellular location is the nucleolus. Functionally, component of the ribosome, a large ribonucleoprotein complex responsible for the synthesis of proteins in the cell. The small ribosomal subunit (SSU) binds messenger RNAs (mRNAs) and translates the encoded message by selecting cognate aminoacyl-transfer RNA (tRNA) molecules. The large subunit (LSU) contains the ribosomal catalytic site termed the peptidyl transferase center (PTC), which catalyzes the formation of peptide bonds, thereby polymerizing the amino acids delivered by tRNAs into a polypeptide chain. The nascent polypeptides leave the ribosome through a tunnel in the LSU and interact with protein factors that function in enzymatic processing, targeting, and the membrane insertion of nascent chains at the exit of the ribosomal tunnel. The polypeptide is Large ribosomal subunit protein uL30A (rlp7) (Schizosaccharomyces pombe (strain 972 / ATCC 24843) (Fission yeast)).